Consider the following 83-residue polypeptide: Small ribosomal subunit protein bS20 (83 aa).

It belongs to the bacterial ribosomal protein bS20 family.

In terms of biological role, binds directly to 16S ribosomal RNA. The polypeptide is Small ribosomal subunit protein bS20 (Staphylococcus carnosus (strain TM300)).